A 900-amino-acid chain; its full sequence is Alanine--tRNA ligase (900 aa).

4 residues coordinate Zn(2+): histidine 587, histidine 591, cysteine 691, and histidine 695.

Belongs to the class-II aminoacyl-tRNA synthetase family. Zn(2+) is required as a cofactor.

It localises to the cytoplasm. The catalysed reaction is tRNA(Ala) + L-alanine + ATP = L-alanyl-tRNA(Ala) + AMP + diphosphate. Catalyzes the attachment of alanine to tRNA(Ala) in a two-step reaction: alanine is first activated by ATP to form Ala-AMP and then transferred to the acceptor end of tRNA(Ala). Also edits incorrectly charged Ser-tRNA(Ala) and Gly-tRNA(Ala) via its editing domain. This is Alanine--tRNA ligase from Aeropyrum pernix (strain ATCC 700893 / DSM 11879 / JCM 9820 / NBRC 100138 / K1).